Consider the following 499-residue polypeptide: Potassium voltage-gated channel subfamily A member 2 (499 aa).

The segment at methionine 1–alanine 27 is disordered. The segment at methionine 1 to methionine 125 is tetramerization domain. Residues methionine 1–glycine 160 lie on the Cytoplasmic side of the membrane. The chain crosses the membrane as a helical span at residues proline 161–leucine 182. The Extracellular portion of the chain corresponds to glutamate 183–proline 221. Asparagine 207 carries N-linked (GlcNAc...) asparagine glycosylation. A helical transmembrane segment spans residues phenylalanine 222–alanine 243. Cysteine 244 carries S-palmitoyl cysteine lipidation. Topologically, residues cysteine 244–isoleucine 254 are cytoplasmic. The chain crosses the membrane as a helical span at residues methionine 255–alanine 275. The Extracellular segment spans residues glutamate 276–serine 289. A helical; Voltage-sensor transmembrane segment spans residues leucine 290–histidine 310. Over serine 311–methionine 325 the chain is Cytoplasmic. Residues lysine 312–methionine 325 form an S4-S5 linker region. Residues arginine 326–tyrosine 347 form a helical membrane-spanning segment. Residues phenylalanine 348 to isoleucine 361 lie on the Extracellular side of the membrane. Residues proline 362–threonine 373 constitute an intramembrane region (helical). The short motif at threonine 374–aspartate 379 is the Selectivity filter element. Residues threonine 374–valine 381 lie within the membrane without spanning it. Topologically, residues proline 382 to lysine 388 are extracellular. The helical transmembrane segment at isoleucine 389–tyrosine 417 threads the bilayer. Topologically, residues histidine 418–valine 499 are cytoplasmic. A Phosphotyrosine modification is found at tyrosine 429. 4 positions are modified to phosphoserine: serine 434, serine 440, serine 441, and serine 449. Position 458 is a phosphotyrosine (tyrosine 458). Serine 468 bears the Phosphoserine mark. The PDZ-binding signature appears at threonine 497–valine 499.

It belongs to the potassium channel family. A (Shaker) (TC 1.A.1.2) subfamily. Kv1.2/KCNA2 sub-subfamily. In terms of assembly, homotetramer and heterotetramer with other channel-forming alpha subunits, such as KCNA1, KCNA4, KCNA5, KCNA6 and KCNA7. Channel activity is regulated by interaction with the beta subunits, including KCNAB1 and KCNAB2. Identified in a complex with KCNA1 and KCNAB2. Identified in a complex with KCNA5 and KCNAB1. Interacts with the beta subunit KCNAB1. Identified in a complex with KCNA4 and FYN. Interacts with PTK2B. Interacts (via C-terminus) with CTTN. Interacts (via N-terminal cytoplasmic domain) with RHOA (GTP-bound form); this regulates channel activity by reducing location at the cell surface in response to CHRM1 activation. Interacts with DRD2. Interacts with SIGMAR1; cocaine consumption leads to increased interaction. Interacts with ADAM22. Interacts with CNTNAP2. Interacts (via C-terminus) with the PDZ domains of DLG1, DLG2 and DLG4. Interacts with ADAM11. Interacts with LYNX1. Post-translationally, phosphorylated on tyrosine residues; phosphorylation increases in response to ischemia. Phosphorylated on tyrosine residues by activated PTK2B/PYK2. Phosphorylation on tyrosine residues suppresses ion channel activity. Phosphorylated on tyrosine residues in response to CHRM1 activation; this abolishes interaction with CTTN. This is probably due to endocytosis of the phosphorylated channel subunits. Phosphorylated on serine residues in response to increased cAMP levels; phosphorylation is apparently not catalyzed by PKA. In terms of processing, N-glycosylated, with complex, sialylated N-glycans. As to expression, expressed in a wide variety of gastrointestinal smooth muscles. Not expressed in portal vein, renal artery, and uterus.

It localises to the cell membrane. It is found in the membrane. The protein resides in the cell projection. Its subcellular location is the axon. The protein localises to the synapse. It localises to the presynaptic cell membrane. It is found in the synaptosome. The protein resides in the endoplasmic reticulum membrane. Its subcellular location is the dendrite. The protein localises to the lamellipodium membrane. It localises to the cell junction. It is found in the paranodal septate junction. The enzyme catalyses K(+)(in) = K(+)(out). Inhibited by 4-aminopyridine (4-AP). Inhibited by dendrotoxin (DTX) and charybdotoxin (CTX), but not by tetraethylammonium (TEA). Inhibited by tityustoxin-K alpha (TsTX-Kalpha), a toxin that is highly specific for KCNA2. Inhibited by maurotoxin. Inhibited by kappaM conotoxins kappaM-RIIIJ and kappaM-RIIIK. Functionally, voltage-gated potassium channel that mediates transmembrane potassium transport in excitable membranes, primarily in the brain and the central nervous system, but also in the cardiovascular system. Prevents aberrant action potential firing and regulates neuronal output. Forms tetrameric potassium-selective channels through which potassium ions pass in accordance with their electrochemical gradient. The channel alternates between opened and closed conformations in response to the voltage difference across the membrane. Can form functional homotetrameric channels and heterotetrameric channels that contain variable proportions of KCNA1, KCNA2, KCNA4, KCNA5, KCNA6, KCNA7, and possibly other family members as well; channel properties depend on the type of alpha subunits that are part of the channel. Channel properties are modulated by cytoplasmic beta subunits that regulate the subcellular location of the alpha subunits and promote rapid inactivation of delayed rectifier potassium channels. In vivo, membranes probably contain a mixture of heteromeric potassium channel complexes, making it difficult to assign currents observed in intact tissues to any particular potassium channel family member. Homotetrameric KCNA2 forms a delayed-rectifier potassium channel that opens in response to membrane depolarization, followed by slow spontaneous channel closure. In contrast, a heteromultimer formed by KCNA2 and KCNA4 shows rapid inactivation. Regulates neuronal excitability and plays a role as pacemaker in the regulation of neuronal action potentials. KCNA2-containing channels play a presynaptic role and prevent hyperexcitability and aberrant action potential firing. Response to toxins that are selective for KCNA2-containing potassium channels suggests that in Purkinje cells, dendritic subthreshold KCNA2-containing potassium channels prevent random spontaneous calcium spikes, suppressing dendritic hyperexcitability without hindering the generation of somatic action potentials, and thereby play an important role in motor coordination. Plays a role in the induction of long-term potentiation of neuron excitability in the CA3 layer of the hippocampus. May function as down-stream effector for G protein-coupled receptors and inhibit GABAergic inputs to basolateral amygdala neurons. May contribute to the regulation of neurotransmitter release, such as gamma-aminobutyric acid (GABA). Contributes to the regulation of the axonal release of the neurotransmitter dopamine. Reduced KCNA2 expression plays a role in the perception of neuropathic pain after peripheral nerve injury, but not acute pain. Plays a role in the regulation of the time spent in non-rapid eye movement (NREM) sleep. This Canis lupus familiaris (Dog) protein is Potassium voltage-gated channel subfamily A member 2 (KCNA2).